The primary structure comprises 613 residues: DBH-like monooxygenase protein 1 (613 aa).

The first 19 residues, 1-19, serve as a signal peptide directing secretion; sequence MCCWPLLLLWGLLPGTAAG. The Lumenal segment spans residues 20–592; it reads GSGRTYPHRT…TSSSSSLHRD (573 aa). A DOMON domain is found at 35–148; that stretch reads GKYWLGWSQR…STVRVIWAYH (114 aa). Residue N114 is glycosylated (N-linked (GlcNAc...) asparagine). The active site involves Y203. 2 disulfide bridges follow: C205/C257 and C242/C269. Cu cation-binding residues include H235 and H236. N247 is a glycosylation site (N-linked (GlcNAc...) asparagine). Cu cation-binding residues include H307, H389, H391, and M464. 3 disulfide bridges follow: C364/C480, C368/C550, and C443/C465. H389 is an active-site residue. N-linked (GlcNAc...) asparagine glycans are attached at residues N476 and N517. Residues 593 to 613 form a helical membrane-spanning segment; it reads FSINLLVCLLLLSCTLSTKSL.

This sequence belongs to the copper type II ascorbate-dependent monooxygenase family. It depends on Cu(2+) as a cofactor. Post-translationally, N-glycosylated. In terms of tissue distribution, highly expressed in lung, kidney, brain and spinal cord.

The protein resides in the endoplasmic reticulum membrane. The chain is DBH-like monooxygenase protein 1 (MOXD1) from Homo sapiens (Human).